Consider the following 272-residue polypeptide: Prohibitin 1 (272 aa).

The residue at position 2 (Ala-2) is an N-acetylalanine. At Thr-91 the chain carries Phosphothreonine. Lys-128 and Lys-186 each carry N6-acetyllysine. Residues 177–211 are a coiled coil; the sequence is KEFTEAVEAKQVAQQEAERARFVVEKAEQQKKAAI. N6-acetyllysine; alternate is present on Lys-202. Position 202 is an N6-succinyllysine; alternate (Lys-202). At Tyr-249 the chain carries Phosphotyrosine.

It belongs to the prohibitin family. The mitochondrial prohibitin complex consists of two subunits (PHB1 and PHB2), assembled into a membrane-associated ring-shaped supercomplex of approximately 1 mDa. Interacts with STOML2. Interacts with MAP1LC3B (membrane-bound form LC3-II); the interaction requires PHB2 and takes place upon Parkin-mediated mitochondrial damage. Interacts with STAT3 (unphosphorylated or phosphorylated at 'Ser-727'). Interacts with CLPB. Interacts with CD86 (via cytoplasmic domain); the interactions increases after priming with CD40.

The protein localises to the mitochondrion inner membrane. Its subcellular location is the nucleus. The protein resides in the cytoplasm. It localises to the cell membrane. Its function is as follows. Protein with pleiotropic attributes mediated in a cell-compartment- and tissue-specific manner, which include the plasma membrane-associated cell signaling functions, mitochondrial chaperone, and transcriptional co-regulator of transcription factors in the nucleus. Plays a role in adipose tissue and glucose homeostasis in a sex-specific manner. Contributes to pulmonary vascular remodeling by accelerating proliferation of pulmonary arterial smooth muscle cells. In terms of biological role, in the mitochondria, together with PHB2, forms large ring complexes (prohibitin complexes) in the inner mitochondrial membrane (IMM) and functions as a chaperone protein that stabilizes mitochondrial respiratory enzymes and maintains mitochondrial integrity in the IMM, which is required for mitochondrial morphogenesis, neuronal survival, and normal lifespan. The prohibitin complex, with DNAJC19, regulates cardiolipin remodeling and the protein turnover of OMA1 in a cardiolipin-binding manner. Regulates mitochondrial respiration activity playing a role in cellular aging. The prohibitin complex plays a role of mitophagy receptor involved in targeting mitochondria for autophagic degradation. Involved in mitochondrial-mediated antiviral innate immunity, activates RIG-I-mediated signal transduction and production of IFNB1 and proinflammatory cytokine IL6. In the nucleus, acts as a transcription coregulator, enhances promoter binding by TP53, a transcription factor it activates, but reduces the promoter binding by E2F1, a transcription factor it represses. Interacts with STAT3 to affect IL17 secretion in T-helper Th17 cells. Functionally, in the plasma membrane, cooperates with CD86 to mediate CD86-signaling in B lymphocytes that regulates the level of IgG1 produced through the activation of distal signaling intermediates. Upon CD40 engagement, required to activate NF-kappa-B signaling pathway via phospholipase C and protein kinase C activation. The sequence is that of Prohibitin 1 (PHB1) from Bos taurus (Bovine).